Consider the following 396-residue polypeptide: Elongation factor Tu (396 aa).

The region spanning 10–205 is the tr-type G domain; that stretch reads KPHVNIGTIG…AVDSYIPTPE (196 aa). Positions 19-26 are G1; it reads GHVDHGKT. 19 to 26 provides a ligand contact to GTP; the sequence is GHVDHGKT. A Mg(2+)-binding site is contributed by threonine 26. Positions 60-64 are G2; it reads GITIN. Residues 81 to 84 are G3; it reads DCPG. GTP-binding positions include 81–85 and 136–139; these read DCPGH and NKCD. Positions 136–139 are G4; sequence NKCD. Residues 174-176 form a G5 region; that stretch reads SAK.

Belongs to the TRAFAC class translation factor GTPase superfamily. Classic translation factor GTPase family. EF-Tu/EF-1A subfamily. As to quaternary structure, monomer.

The protein resides in the cytoplasm. The catalysed reaction is GTP + H2O = GDP + phosphate + H(+). Functionally, GTP hydrolase that promotes the GTP-dependent binding of aminoacyl-tRNA to the A-site of ribosomes during protein biosynthesis. The protein is Elongation factor Tu of Brevibacillus brevis (strain 47 / JCM 6285 / NBRC 100599).